The following is a 228-amino-acid chain: Geranylgeranylglyceryl phosphate synthase (228 aa).

Lysine 14 contributes to the sn-glycerol 1-phosphate binding site. Aspartate 16 and threonine 42 together coordinate Mg(2+). Residues 160 to 165 (YIEYSG), glycine 190, and 210 to 211 (GN) contribute to the sn-glycerol 1-phosphate site.

This sequence belongs to the GGGP/HepGP synthase family. Group I subfamily. The cofactor is Mg(2+).

It is found in the cytoplasm. The catalysed reaction is sn-glycerol 1-phosphate + (2E,6E,10E)-geranylgeranyl diphosphate = sn-3-O-(geranylgeranyl)glycerol 1-phosphate + diphosphate. It functions in the pathway membrane lipid metabolism; glycerophospholipid metabolism. Functionally, prenyltransferase that catalyzes the transfer of the geranylgeranyl moiety of geranylgeranyl diphosphate (GGPP) to the C3 hydroxyl of sn-glycerol-1-phosphate (G1P). This reaction is the first ether-bond-formation step in the biosynthesis of archaeal membrane lipids. The chain is Geranylgeranylglyceryl phosphate synthase from Methanocella arvoryzae (strain DSM 22066 / NBRC 105507 / MRE50).